Reading from the N-terminus, the 1907-residue chain is Receptor-type tyrosine-protein phosphatase S (1907 aa).

An N-terminal signal peptide occupies residues 1 to 29 (MAPTWSPSVVSVVGPVGLFLVLLARGCLA). Residues 30–1257 (EEPPRFIREP…PQPIVDGEEG (1228 aa)) are Extracellular-facing. 3 Ig-like C2-type domains span residues 33–123 (PRFI…AKLT), 135–224 (PNID…ANLY), and 232–314 (PRFS…AQIT). Intrachain disulfides connect Cys54/Cys107 and Cys156/Cys207. The important for binding to glycosaminoglycan chains stretch occupies residues 68 to 72 (KKGKK). 2 N-linked (GlcNAc...) asparagine glycosylation sites follow: Asn250 and Asn295. An intrachain disulfide couples Cys253 to Cys298. 8 consecutive Fibronectin type-III domains span residues 321-411 (APGT…TGEQ), 416-510 (APRN…TQQG), 514-603 (QPMN…TLQA), 608-705 (PPQD…TDED), 710-809 (PPRK…TKGA), 810-906 (VLGR…APRG), 907-1008 (FPQI…LARD), and 1011-1095 (SPKN…TAFN). Over residues 691–700 (PGPESSPVVV) the composition is skewed to low complexity. Residues 691-711 (PGPESSPVVVRTDEDVPSAPP) form a disordered region. Asn720 carries N-linked (GlcNAc...) asparagine glycosylation. Asn916 is a glycosylation site (N-linked (GlcNAc...) asparagine). A helical transmembrane segment spans residues 1258–1278 (LIWVIGPVLAVVFIICIVIAI). The Cytoplasmic portion of the chain corresponds to 1279–1907 (LLYKNKPDSK…YLGSFDHYAT (629 aa)). A compositionally biased stretch (basic and acidic residues) spans 1286–1296 (DSKRKDSEPRT). The disordered stretch occupies residues 1286 to 1313 (DSKRKDSEPRTKCLLNNADLAPHHPKDP). 2 Tyrosine-protein phosphatase domains span residues 1352 to 1607 (LSQE…LLEA) and 1639 to 1898 (MELE…ALEY). Substrate contacts are provided by residues Asp1516, 1548–1554 (CSAGVGR), and Gln1592. Cys1548 acts as the Phosphocysteine intermediate in catalysis. Catalysis depends on Cys1839, which acts as the Phosphocysteine intermediate.

It belongs to the protein-tyrosine phosphatase family. Receptor class 2A subfamily. Binding to large heparan sulfate proteoglycan structures promotes oligomerization. Binding to chondroitin sulfate proteoglycan does not lead to oligomerization. Interacts (via Ig-like domains) with NTRK3. Interacts (via Ig-like domains) with NTRK1, but does not form detectable complexes with NTRK2. Interacts with PPFIA1, PPFIA2 and PPFIA3. In terms of processing, a cleavage occurs, separating the extracellular domain from the transmembrane segment. This process called 'ectodomain shedding' is thought to be involved in receptor desensitization, signal transduction and/or membrane localization. As to expression, detected in brain cortex, cerebellum and thoracic spinal cord (at protein level). Detected in motor cortex and white matter of the spinal cord, but not in spinal cord gray matter. Isoform 1 and isoform 6 are predominantly expressed in the brain (cerebrum and cerebellum) and to a lesser extent in the heart and skeletal muscle. Also found in neuronal-derived cell lines. Detected in the ganglion cell layer of the retina and in glial cells along the optic nerve. Detected in bone marrow and spleen plasmacytoid dendritic cells.

Its subcellular location is the cell membrane. It is found in the cell projection. The protein resides in the axon. The protein localises to the perikaryon. It localises to the cytoplasmic vesicle. Its subcellular location is the secretory vesicle. It is found in the synaptic vesicle membrane. The protein resides in the synapse. The protein localises to the synaptosome. It localises to the postsynaptic density. Its subcellular location is the neuron projection. It is found in the growth cone. It catalyses the reaction O-phospho-L-tyrosyl-[protein] + H2O = L-tyrosyl-[protein] + phosphate. Its function is as follows. Cell surface receptor that binds to glycosaminoglycans, including chondroitin sulfate proteoglycans and heparan sulfate proteoglycans. Binding to chondroitin sulfate and heparan sulfate proteoglycans has opposite effects on PTPRS oligomerization and regulation of neurite outgrowth. Contributes to the inhibition of neurite and axonal outgrowth by chondroitin sulfate proteoglycans, also after nerve transection. Plays a role in stimulating neurite outgrowth in response to the heparan sulfate proteoglycan GPC2. Required for normal brain development, especially for normal development of the pituitary gland and the olfactory bulb. Functions as a tyrosine phosphatase. Mediates dephosphorylation of NTRK1, NTRK2 and NTRK3. Plays a role in down-regulation of signaling cascades that lead to the activation of Akt and MAP kinases. Down-regulates TLR9-mediated activation of NF-kappa-B, as well as production of TNF, interferon alpha and interferon beta. In Mus musculus (Mouse), this protein is Receptor-type tyrosine-protein phosphatase S (Ptprs).